An 830-amino-acid chain; its full sequence is Periplasmic nitrate reductase (830 aa).

Residues 1–30 constitute a signal peptide (tat-type signal); sequence MTTRREFIKRSAAVTAACTAGISLSGEASN. In terms of domain architecture, 4Fe-4S Mo/W bis-MGD-type spans 40 to 96; it reads LKWSKAPCRFCGTGCSVNVAVKDNQVVATHGDIQSEVNRGLNCVKGYFLSKIMYGKD. Residues Cys-47, Cys-50, Cys-54, and Cys-82 each coordinate [4Fe-4S] cluster. Mo-bis(molybdopterin guanine dinucleotide) is bound by residues Lys-84, Gln-151, Asn-176, Cys-180, 213 to 220, 244 to 248, Met-374, Gln-378, Asn-484, 510 to 511, Lys-533, Asp-560, and 720 to 729; these read WGSNMAEM, STFQH, SE, and TGRVLEHWHS. Trp-796 is a binding site for substrate. Mo-bis(molybdopterin guanine dinucleotide)-binding residues include Asn-804 and Lys-821.

Belongs to the prokaryotic molybdopterin-containing oxidoreductase family. NasA/NapA/NarB subfamily. In terms of assembly, component of the periplasmic nitrate reductase NapAB complex composed of NapA and NapB. The cofactor is [4Fe-4S] cluster. Mo-bis(molybdopterin guanine dinucleotide) is required as a cofactor. In terms of processing, predicted to be exported by the Tat system. The position of the signal peptide cleavage has not been experimentally proven.

It is found in the periplasm. The catalysed reaction is 2 Fe(II)-[cytochrome] + nitrate + 2 H(+) = 2 Fe(III)-[cytochrome] + nitrite + H2O. Its function is as follows. Catalytic subunit of the periplasmic nitrate reductase complex NapAB. Receives electrons from NapB and catalyzes the reduction of nitrate to nitrite. This chain is Periplasmic nitrate reductase, found in Hahella chejuensis (strain KCTC 2396).